The following is a 79-amino-acid chain: Phosphoribosylformylglycinamidine synthase subunit PurS (79 aa).

This sequence belongs to the PurS family. As to quaternary structure, homodimer. Part of the FGAM synthase complex composed of 1 PurL, 1 PurQ and 2 PurS subunits.

Its subcellular location is the cytoplasm. It catalyses the reaction N(2)-formyl-N(1)-(5-phospho-beta-D-ribosyl)glycinamide + L-glutamine + ATP + H2O = 2-formamido-N(1)-(5-O-phospho-beta-D-ribosyl)acetamidine + L-glutamate + ADP + phosphate + H(+). The protein operates within purine metabolism; IMP biosynthesis via de novo pathway; 5-amino-1-(5-phospho-D-ribosyl)imidazole from N(2)-formyl-N(1)-(5-phospho-D-ribosyl)glycinamide: step 1/2. In terms of biological role, part of the phosphoribosylformylglycinamidine synthase complex involved in the purines biosynthetic pathway. Catalyzes the ATP-dependent conversion of formylglycinamide ribonucleotide (FGAR) and glutamine to yield formylglycinamidine ribonucleotide (FGAM) and glutamate. The FGAM synthase complex is composed of three subunits. PurQ produces an ammonia molecule by converting glutamine to glutamate. PurL transfers the ammonia molecule to FGAR to form FGAM in an ATP-dependent manner. PurS interacts with PurQ and PurL and is thought to assist in the transfer of the ammonia molecule from PurQ to PurL. The sequence is that of Phosphoribosylformylglycinamidine synthase subunit PurS from Mycobacterium leprae (strain TN).